A 434-amino-acid chain; its full sequence is D-amino acid dehydrogenase (434 aa).

3 to 17 (VLVLGSGVIGTASAY) contributes to the FAD binding site.

The protein belongs to the DadA oxidoreductase family. FAD is required as a cofactor.

The catalysed reaction is a D-alpha-amino acid + A + H2O = a 2-oxocarboxylate + AH2 + NH4(+). Its pathway is amino-acid degradation; D-alanine degradation; NH(3) and pyruvate from D-alanine: step 1/1. In terms of biological role, oxidative deamination of D-amino acids. This is D-amino acid dehydrogenase from Pseudomonas putida (strain ATCC 700007 / DSM 6899 / JCM 31910 / BCRC 17059 / LMG 24140 / F1).